The following is a 51-amino-acid chain: Large ribosomal subunit protein bL33 (51 aa).

This sequence belongs to the bacterial ribosomal protein bL33 family.

The protein is Large ribosomal subunit protein bL33 of Vesicomyosocius okutanii subsp. Calyptogena okutanii (strain HA).